The chain runs to 2944 residues: Collagen alpha-1(VII) chain (2944 aa).

Positions 1-16 are cleaved as a signal peptide; sequence MTLRLLVAALCAGILA. A nonhelical region (NC1) region spans residues 17–1253; sequence EAPRVRAQHR…PEPCPVYCPK (1237 aa). A VWFA 1 domain is found at 38 to 211; it reads DIVFLLDGSS…SILRTLLPLV (174 aa). 9 Fibronectin type-III domains span residues 234-329, 330-416, 417-507, 510-597, 600-687, 688-775, 778-866, 869-957, and 958-1051; these read APRD…TALE, GPEL…TDAS, VEQT…PELP, PVTD…EPET, AVPG…DPLG, PVRT…APEP, RVSR…PPEA, ALGT…SPRV, and PSIE…CPRG. N337 is a glycosylation site (N-linked (GlcNAc...) asparagine). A disordered region spans residues 632–651; sequence STGSGPESSQTLPPDSTATD. A glycan (N-linked (GlcNAc...) asparagine) is linked at N786. The region spanning 1054-1229 is the VWFA 2 domain; that stretch reads DVVFLPHATQ…PSLDQAVSGL (176 aa). N1109 is a glycosylation site (N-linked (GlcNAc...) asparagine). Short sequence motifs (cell attachment site) lie at residues 1170-1172 and 1334-1336; these read RGD. Disordered regions lie at residues 1239–1941, 1963–2782, and 2837–2872; these read TTQP…SVPN, WDES…EKGE, and SHAE…PWDS. Positions 1254–1477 are interrupted collagenous region; the sequence is GQKGEPGEMG…GPRGPPGAIG (224 aa). Residues 1254 to 2784 are triple-helical region; the sequence is GQKGEPGEMG…GPRGEKGEAA (1531 aa). Residues 1336-1346 show a composition bias toward basic and acidic residues; the sequence is DPGERGPRGPK. A compositionally biased stretch (gly residues) spans 1355 to 1365; the sequence is VIGGEGPGLPG. Residues 1399 to 1408 show a composition bias toward basic and acidic residues; sequence KGDKGDRGER. The span at 1429–1440 shows a compositional bias: pro residues; sequence PGSPGPQGPVGP. Residues 1574-1583 show a composition bias toward low complexity; that stretch reads RGPPGLVLPG. Basic and acidic residues-rich tracts occupy residues 1630 to 1642, 1669 to 1683, and 1715 to 1733; these read RGRD…KGDE, VGEK…EDGR, and AREK…RGPK. The span at 1786–1802 shows a compositional bias: low complexity; sequence KPGAAGPSGPNGAAGKA. The span at 1852-1877 shows a compositional bias: basic and acidic residues; the sequence is EDGRKGEKGDSGASGREGRDGPKGER. Positions 1886 to 1897 are enriched in pro residues; it reads QGPPGLPGPVGP. The segment covering 1898-1911 has biased composition (gly residues); the sequence is PGQGFPGVPGGTGP. Residues 1974-1984 show a composition bias toward basic and acidic residues; sequence PERRRGPKGDS. The short motif at 2008–2010 is the Cell attachment site element; sequence RGD. 4-hydroxyproline occurs at positions 2036 and 2039. Residues 2046-2055 are compositionally biased toward gly residues; it reads GRAGGVGEAG. Residues 2056–2074 are compositionally biased toward basic and acidic residues; sequence RPGERGERGEKGERGEQGR. Residues 2078 to 2092 are compositionally biased toward pro residues; it reads PGLPGTPGPPGPPGP. Residues P2084, P2087, and P2090 each carry the 4-hydroxyproline modification. The segment covering 2127–2143 has biased composition (basic and acidic residues); sequence PKGDRGVPGIKGDRGEP. P2167, P2176, P2185, and P2188 each carry 4-hydroxyproline. Composition is skewed to low complexity over residues 2191 to 2206 and 2235 to 2250; these read PGLA…SGLK and SGLV…PGQV. The segment covering 2328–2346 has biased composition (basic and acidic residues); it reads AKGDRGLPGPRGEKGEAGR. Low complexity predominate over residues 2387–2406; it reads VKGDLGLPGLPGAPGVVGFP. The segment covering 2438–2448 has biased composition (pro residues); the sequence is PLGPPGPPGSV. Basic and acidic residues-rich tracts occupy residues 2471–2486 and 2534–2570; these read RGER…DGRP and AKGD…EPGD. The Cell attachment site motif lies at 2553 to 2555; sequence RGD. Over residues 2573-2601 the composition is skewed to low complexity; the sequence is SAGLPGLRGLLGPQGQPGAAGIPGDPGSP. 5-hydroxylysine; alternate occurs at positions 2625 and 2631. O-linked (Gal...) hydroxylysine; alternate glycosylation is found at K2625 and K2631. Residues P2664, P2667, and P2673 each carry the 4-hydroxyproline modification. Residues 2704 to 2713 show a composition bias toward gly residues; the sequence is GTPGIGGFPG. Over residues 2749 to 2762 the composition is skewed to low complexity; that stretch reads GERVVGAPGVPGAP. Positions 2785–2944 are nonhelical region (NC2); sequence LTEDDIRGFV…QSQGTGTAQD (160 aa). The span at 2837–2847 shows a compositional bias: basic and acidic residues; that stretch reads SHAEEEERVPP. Over residues 2848–2872 the composition is skewed to acidic residues; the sequence is EDDEYSEYSEYSVEEYQDPEAPWDS. The BPTI/Kunitz inhibitor domain occupies 2872-2944; the sequence is SDDPCSLPLD…QSQGTGTAQD (73 aa). 3 disulfide bridges follow: C2876/C2929, C2885/C2912, and C2904/C2925.

In terms of assembly, homotrimer. Interacts with MIA3/TANGO1; facilitating its loading into transport carriers and subsequent secretion. Post-translationally, prolines at the third position of the tripeptide repeating unit (G-X-Y) are hydroxylated in some or all of the chains.

The protein resides in the secreted. It is found in the extracellular space. Its subcellular location is the extracellular matrix. The protein localises to the basement membrane. In terms of biological role, stratified squamous epithelial basement membrane protein that forms anchoring fibrils which may contribute to epithelial basement membrane organization and adherence by interacting with extracellular matrix (ECM) proteins such as type IV collagen. This Homo sapiens (Human) protein is Collagen alpha-1(VII) chain (COL7A1).